The following is a 665-amino-acid chain: Probable arginine--tRNA ligase, cytoplasmic (665 aa).

L-arginine is bound by residues 204–206 (SPN), His-215, Tyr-390, Asp-394, and Gln-418. A 'HIGH' region motif is present at residues 205-216 (PNIAKQMHVGHL). An interaction with tRNA region spans residues 535–549 (NTAVYLLYTYTRICS).

It belongs to the class-I aminoacyl-tRNA synthetase family.

It is found in the cytoplasm. It localises to the cytosol. The catalysed reaction is tRNA(Arg) + L-arginine + ATP = L-arginyl-tRNA(Arg) + AMP + diphosphate. Its function is as follows. Forms part of a macromolecular complex that catalyzes the attachment of specific amino acids to cognate tRNAs during protein synthesis. This chain is Probable arginine--tRNA ligase, cytoplasmic, found in Drosophila melanogaster (Fruit fly).